A 161-amino-acid polypeptide reads, in one-letter code: Lipoprotein signal peptidase (161 aa).

3 helical membrane-spanning segments follow: residues 6–26 (ILFLITAGLVLLLDQFTKFYV), 67–87 (GLFFTSVTLIAAGLILFYLIK), and 90–110 (VSDLMMVIPLALVLAGAMGNL). Active-site residues include aspartate 121 and aspartate 139. A helical membrane pass occupies residues 134 to 154 (AFNIADTAISIGVLFLVVDMI).

This sequence belongs to the peptidase A8 family.

The protein localises to the cell inner membrane. The enzyme catalyses Release of signal peptides from bacterial membrane prolipoproteins. Hydrolyzes -Xaa-Yaa-Zaa-|-(S,diacylglyceryl)Cys-, in which Xaa is hydrophobic (preferably Leu), and Yaa (Ala or Ser) and Zaa (Gly or Ala) have small, neutral side chains.. It functions in the pathway protein modification; lipoprotein biosynthesis (signal peptide cleavage). Functionally, this protein specifically catalyzes the removal of signal peptides from prolipoproteins. The protein is Lipoprotein signal peptidase of Syntrophus aciditrophicus (strain SB).